The primary structure comprises 85 residues: Toxin TdNa8 (85 aa).

The signal sequence occupies residues 1–19 (MNYLTLIAAASLLTAGTES). The region spanning 21–81 (KDGYPVKEGD…AAIKGYGRCR (61 aa)) is the LCN-type CS-alpha/beta domain. 4 cysteine pairs are disulfide-bonded: Cys31–Cys80, Cys35–Cys56, Cys42–Cys63, and Cys46–Cys65. Pro82 bears the Proline amide mark.

This sequence belongs to the long (4 C-C) scorpion toxin superfamily. Sodium channel inhibitor family. Alpha subfamily. As to expression, expressed by the venom gland.

Its subcellular location is the secreted. Its function is as follows. Alpha toxins bind voltage-independently at site-3 of sodium channels (Nav) and inhibit the inactivation of the activated channels, thereby blocking neuronal transmission. In Tityus discrepans (Venezuelan scorpion), this protein is Toxin TdNa8.